Consider the following 122-residue polypeptide: uncharacterized protein (122 aa).

The signal sequence occupies residues 1 to 33; that stretch reads MASTVAGLSMSAESLRLPLLIGVSSGMLSVSDA.

This is an uncharacterized protein from Saccharomyces cerevisiae (strain ATCC 204508 / S288c) (Baker's yeast).